The primary structure comprises 1020 residues: Phosphatidylinositol 3-kinase VPS34 (1020 aa).

A C2 PI3K-type domain is found at 49-210; that stretch reads LSTKFEDPTV…NWLDKMVLPK (162 aa). The region spanning 331-577 is the PIK helical domain; it reads DKELKPTPQL…DGPIKIYMDI (247 aa). Positions 666 to 1004 constitute a PI3K/PI4K catalytic domain; it reads YPEESSVFKS…LINDSVNAFL (339 aa). A G-loop region spans residues 672–678; the sequence is VFKSSLA. A catalytic loop region spans residues 873–881; the sequence is GVGDRHLDN. The activation loop stretch occupies residues 892-913; the sequence is HADFGYILGRDPKPFPPLMKLP.

Belongs to the PI3/PI4-kinase family. Component of the autophagy-specific VPS34 PI3-kinase complex I composed of at least VPS15, VPS30, VPS34, and of the VPS34 PI3-kinase complex II composed of VPS15, VPS30, VPS34 and VPS38. Interacts with VMNA7. In terms of processing, autophosphorylated.

Its subcellular location is the golgi apparatus. The protein resides in the trans-Golgi network membrane. The protein localises to the endosome membrane. The catalysed reaction is a 1,2-diacyl-sn-glycero-3-phospho-(1D-myo-inositol) + ATP = a 1,2-diacyl-sn-glycero-3-phospho-(1D-myo-inositol-3-phosphate) + ADP + H(+). Multifunctional phosphatidylinositol 3-kinase involved in acidification of vacuoles, pH-dependent cell growth, and autophagocytosis. Plays an important role in protein transport and virulence. Component of the autophagy-specific VPS34 PI3-kinase complex I essential to recruit the ATG8-phosphatidylinositol conjugate and the ATG12-ATG5 conjugate to the pre-autophagosomal structure. Also involved in endosome-to-Golgi retrograde transport as part of the VPS34 PI3-kinase complex II. This second complex is required for the endosome-to-Golgi retrieval of PEP1 and KEX2, and the recruitment of VPS5 and VPS7, two components of the retromer complex, to endosomal membranes (probably through the synthesis of a specific pool of phosphatidylinositol 3-phosphate recruiting the retromer to the endosomes). Finally, it might also be involved in ethanol tolerance and cell wall integrity. The polypeptide is Phosphatidylinositol 3-kinase VPS34 (Candida albicans (strain SC5314 / ATCC MYA-2876) (Yeast)).